Reading from the N-terminus, the 133-residue chain is NADPH-dependent 7-cyano-7-deazaguanine reductase (133 aa).

Catalysis depends on Cys46, which acts as the Thioimide intermediate. Asp53 acts as the Proton donor in catalysis. Residues 68-70 and 87-88 contribute to the substrate site; these read VEL and HE.

This sequence belongs to the GTP cyclohydrolase I family. QueF type 1 subfamily.

It is found in the cytoplasm. It carries out the reaction 7-aminomethyl-7-carbaguanine + 2 NADP(+) = 7-cyano-7-deazaguanine + 2 NADPH + 3 H(+). It participates in tRNA modification; tRNA-queuosine biosynthesis. Its function is as follows. Catalyzes the NADPH-dependent reduction of 7-cyano-7-deazaguanine (preQ0) to 7-aminomethyl-7-deazaguanine (preQ1). The protein is NADPH-dependent 7-cyano-7-deazaguanine reductase of Parasynechococcus marenigrum (strain WH8102).